Reading from the N-terminus, the 385-residue chain is tRNA 2-selenouridine synthase (385 aa).

Residues 15–138 (FIADTPLIDV…ARQFLISTID (124 aa)) enclose the Rhodanese domain. Cys-98 serves as the catalytic S-selanylcysteine intermediate.

Belongs to the SelU family. As to quaternary structure, monomer.

It catalyses the reaction 5-methylaminomethyl-2-thiouridine(34) in tRNA + selenophosphate + (2E)-geranyl diphosphate + H2O + H(+) = 5-methylaminomethyl-2-selenouridine(34) in tRNA + (2E)-thiogeraniol + phosphate + diphosphate. The enzyme catalyses 5-methylaminomethyl-2-thiouridine(34) in tRNA + (2E)-geranyl diphosphate = 5-methylaminomethyl-S-(2E)-geranyl-thiouridine(34) in tRNA + diphosphate. The catalysed reaction is 5-methylaminomethyl-S-(2E)-geranyl-thiouridine(34) in tRNA + selenophosphate + H(+) = 5-methylaminomethyl-2-(Se-phospho)selenouridine(34) in tRNA + (2E)-thiogeraniol. It carries out the reaction 5-methylaminomethyl-2-(Se-phospho)selenouridine(34) in tRNA + H2O = 5-methylaminomethyl-2-selenouridine(34) in tRNA + phosphate. In terms of biological role, involved in the post-transcriptional modification of the uridine at the wobble position (U34) of tRNA(Lys), tRNA(Glu) and tRNA(Gln). Catalyzes the conversion of 2-thiouridine (S2U-RNA) to 2-selenouridine (Se2U-RNA). Acts in a two-step process involving geranylation of 2-thiouridine (S2U) to S-geranyl-2-thiouridine (geS2U) and subsequent selenation of the latter derivative to 2-selenouridine (Se2U) in the tRNA chain. This Nitrosomonas europaea (strain ATCC 19718 / CIP 103999 / KCTC 2705 / NBRC 14298) protein is tRNA 2-selenouridine synthase.